The chain runs to 1714 residues: MHLRAHRTRRGKVSPTAKTKSLLHFIVLCVAGVVVHAQEQGIDILHQLGLGGKDVRHSSPATAVPSASTPLPQGVHLTESGVIFKNDAYIETPFVKILPVNLGQPFTILTGLQSHRVNNAFLFSIRNKNRLQLGVQLLPKKLVVHIRGKQPAVFNYSVHDEQWHSFAITIRNQSVSMFVECGKKYFSTETIPEVQTFDSNSVFTLGSMNNNSIHFEGIVCQLDIIPSAEASADYCRYVKQQCRQADKYQPETSIPCTTLIPTKIPEHSPPPKLFAEKVLSEDTFTEGKSIPNIIKNDSETVYKRQEHQISRSQLSSLQSGNVSAVDLTNHGIQAKEMITEEDTQTNFSLSVTTHRISEAKMNTKEKFSSLLNMSDNITQHDDRVTGLSLFKKMPSILPQIKQDTITNLKKAITANLHTNELMEMQPILNTSLHRVTNEPSVDNHLDLRKEGEFYPDATYPIENSYETELYDYYYYEDLNTMLEMEYLRGPKGDTGPPGPPGPAGIPGPSGKRGPRGIPGPHGNPGLPGLPGPKGPKGDPGFSPGQPVPGEKGDQGLSGLMGPPGMQGDKGLKGHPGLPGLPGEQGIPGFAGNIGSPGYPGRQGLAGPEGNPGPKGAQGFIGSPGEAGQLGPEGERGIPGIRGKKGFKGRQGFPGDFGDRGPAGLDGSPGLVGGTGPPGFPGLRGSVGPVGPIGPAGIPGPMGLSGNKGLPGIKGDKGEQGTAGELGEPGYPGDKGAVGLPGPPGMRGKSGPSGQTGDPGLQGPSGPPGPEGFPGDIGIPGQNGPEGPKGLLGNRGPPGPPGLKGTQGEEGPIGAFGELGPRGKPGQKGYAGEPGPEGLKGEVGDQGNIGKIGETGPVGLPGEVGMTGSIGEKGERGSPGPLGPQGEKGVMGYPGPPGVPGPIGPLGLPGHVGARGPPGSQGPKGQRGSRGPDGLLGEQGIQGAKGEKGDQGKRGPHGLIGKTGNPGERGFQGKPGLQGLPGSTGDRGLPGEPGLRGLQGDVGPPGEMGMEGPPGTEGESGLQGEPGAKGDVGTAGSVGGTGEPGLRGEPGAPGEEGLQGKDGLKGVPGGRGLPGEDGEKGEMGLPGIIGPLGRSGQTGLPGPEGIVGIPGQRGRPGKKGDKGQIGPTGEVGSRGPPGKIGKSGPKGARGTRGAVGHLGLMGPDGEPGIPGYRGHQGQPGPSGLPGPKGEKGYPGEDSTVLGPPGPRGEPGPVGDQGERGEPGAEGYKGHVGVPGLRGATGQQGPPGEPGDQGEQGLKGERGSEGNKGKKGAPGPSGKPGIPGLQGLLGPKGIQGYHGADGISGNPGKIGPPGKQGLPGIRGGPGRTGLAGAPGPPGVKGSSGLPGSPGIQGPKGEQGLPGQPGIQGKRGHRGAQGDQGPCGDPGLKGQPGEYGVQGLTGFQGFPGPKGPEGDAGIVGISGPKGPIGHRGNTGPLGREGIIGPTGRTGPRGEKGFRGETGPQGPRGQPGPPGPPGAPGPRKQMDINAAIQALIESNTALQMESYQNTEVTLIDHSEEIFKTLNYLSNLLHSIKNPLGTRDNPARICKDLLNCEQKVSDGKYWIDPNLGCPSDAIEVFCNFSAGGQTCLPPVSVTKLEFGVGKVQMNFLHLLSSEATHIITIHCLNTPRWTSTQTSGPGLPIGFKGWNGQIFKVNTLLEPKVLSDDCKIQDGSWHKATFLFHTQEPNQLPVIEVQKLPHLKTERKYYIDSSSVCFL.

A signal peptide spans 1 to 35 (MHLRAHRTRRGKVSPTAKTKSLLHFIVLCVAGVVV). The 77-residue stretch at 141–217 (KLVVHIRGKQ…MNNNSIHFEG (77 aa)) folds into the Laminin G-like domain. N-linked (GlcNAc...) asparagine glycosylation is found at asparagine 155, asparagine 321, and asparagine 376. Collagen-like domains lie at 487 to 542 (LRGP…PGFS), 552 to 611 (GDQG…EGNP), 660 to 719 (GPAG…KGEQ), 741 to 797 (GPPG…RGPP), 798 to 857 (GPPG…TGPV), 858 to 887 (GLPG…QGEK), 888 to 947 (GVMG…KGEK), 948 to 1007 (GDQG…PGEM), 1011 to 1052 (GPPG…PGAP), 1053 to 1112 (GEEG…PGQR), 1116 to 1170 (GKKG…GIPG), 1172 to 1196 (RGHQ…PGED), 1201 to 1249 (GPPG…GEPG), 1252 to 1306 (GEQG…GNPG), 1309 to 1353 (GPPG…QGPK), 1354 to 1413 (GEQG…EGDA), and 1420 to 1479 (GPKG…PGPR). A disordered region spans residues 487–1481 (LRGPKGDTGP…PPGAPGPRKQ (995 aa)). Pro residues predominate over residues 496-505 (PPGPPGPAGI). Composition is skewed to low complexity over residues 574 to 587 (HPGL…QGIP) and 685 to 701 (SVGP…PGPM). A compositionally biased stretch (pro residues) spans 893-902 (PGPPGVPGPI). A compositionally biased stretch (low complexity) spans 985–1019 (DRGLPGEPGLRGLQGDVGPPGEMGMEGPPGTEGES). Gly residues-rich tracts occupy residues 1035–1044 (GSVGGTGEPG) and 1065–1074 (GVPGGRGLPG). Composition is skewed to low complexity over residues 1132 to 1145 (SRGP…SGPK) and 1174 to 1186 (HQGQ…LPGP). The span at 1256–1266 (LKGERGSEGNK) shows a compositional bias: basic and acidic residues. The span at 1271-1293 (APGPSGKPGIPGLQGLLGPKGIQ) shows a compositional bias: low complexity. Over residues 1318-1327 (GIRGGPGRTG) the composition is skewed to gly residues. Residues 1466–1476 (QPGPPGPPGAP) are compositionally biased toward pro residues. Residues 1515–1714 (EEIFKTLNYL…YIDSSSVCFL (200 aa)) form the Fibrillar collagen NC1 domain.

The protein belongs to the fibrillar collagen family.

The protein localises to the secreted. It localises to the extracellular space. Its subcellular location is the extracellular matrix. May participate in regulating type I collagen fibrillogenesis at specific anatomical locations during fetal development. This chain is Collagen alpha-1(XXIV) chain (COL24A1), found in Homo sapiens (Human).